The following is a 389-amino-acid chain: Alkanesulfonate monooxygenase (389 aa).

It belongs to the SsuD family.

The enzyme catalyses an alkanesulfonate + FMNH2 + O2 = an aldehyde + FMN + sulfite + H2O + 2 H(+). Its function is as follows. Catalyzes the desulfonation of aliphatic sulfonates. The chain is Alkanesulfonate monooxygenase from Rhizobium etli (strain CIAT 652).